Here is a 793-residue protein sequence, read N- to C-terminus: MQGEDARYLKRKVKGGNIDVHPSEKALIVQYEVEATILGEMGDPMLGERKECQKIIRLKSLNANTDITSLARKVVEECKLIHPSKLSEVEQLLYYLQNRRDSLPGKEKKEKSSKPKDPPPFEGMEIDEVANINDMDEYIELLYEDIPDKVRGSALILQLARNPDNLEELLLNETALGALARVLREDWKQSVELATNIIYIFFCFSSFSHFHGLITHYKIGALCMNIIDHELKRHELWQEELSKKKKAVDEDLENQTLRKDYDKTFKKYQGLVVKQEQLLRVALYLLLNLAEDTRTELKMRNKNIVHMLVKALDRDNFELLILVVSFLKKLSIFMENKNDMVEMDIVEKLVKMIPCEHEDLLNITLRLLLNLSFDTGLRNKMVQVGLLPKLTALLGNENYKQIAMCVLYHISMDDRFKSMFAYTDCIPQLMKMLFECSDERIDLELISFCINLAANKRNVQLICEGNGLKMLMKRALKLKDPLLMKMIRNISQHDGPTKNLFIDYVGDLAAQISSDEEEEFVIECLGTLANLTIPDLDWELVLKEYKLVPFLKDKLKPGAAEDDLVLEVVIMIGTVSMDDSCAALLAKSGIIPALIELLNAQQEDDEFVCQIIYVFYQMVFHQATRDVIIKETQAPAYLIDLMHDKNNEIRKVCDNTLDIIAEYDEEWAKKIQSEKFRWHNSQWLEMVESRQLDESEQYLYGDDRIEPYIHEGDILERPDLFYNSDGLITSEGAISPDFFNDFHLQNGDVVGQHAFPGSLGMDGFGQPLGILGRPATAYGFRPDEPYYYSFGSR.

Phosphoserine is present on serine 60. A compositionally biased stretch (basic and acidic residues) spans leucine 103–proline 119. Residues leucine 103–glycine 123 form a disordered region. ARM repeat units follow at residues phenylalanine 333–phenylalanine 373, aspartate 374–methionine 412, aspartate 494–isoleucine 533, aspartate 578–phenylalanine 620, and histidine 621–glutamate 662.

As to quaternary structure, interacts with SMC3 subunit of the cohesin complex. Heterotrimer of KIFAP3, KIF3A and KIF3B. Interacts with RAP1GDS1/SMG GDS. In terms of processing, phosphorylated on tyrosine residues by SRC in vitro; this reduces the binding affinity of the protein for RAP1GDS1.

Functionally, involved in tethering the chromosomes to the spindle pole and in chromosome movement. Binds to the tail domain of the KIF3A/KIF3B heterodimer to form a heterotrimeric KIF3 complex and may regulate the membrane binding of this complex. The protein is Kinesin-associated protein 3 (Kifap3) of Mus musculus (Mouse).